A 375-amino-acid chain; its full sequence is Actin (375 aa).

The protein belongs to the actin family.

Its subcellular location is the cytoplasm. The protein localises to the cytoskeleton. The catalysed reaction is ATP + H2O = ADP + phosphate + H(+). Actins are highly conserved proteins that are involved in various types of cell motility and are ubiquitously expressed in all eukaryotic cells. In Giardia intestinalis (Giardia lamblia), this protein is Actin.